The primary structure comprises 405 residues: Bifunctional enzyme IspD/IspF (405 aa).

Residues 1–246 (MLQMPSKQPI…KLSASLLPDV (246 aa)) are 2-C-methyl-D-erythritol 4-phosphate cytidylyltransferase. The 2-C-methyl-D-erythritol 2,4-cyclodiphosphate synthase stretch occupies residues 247–405 (RTGNGYDVHQ…TATVVYRGRT (159 aa)). A divalent metal cation contacts are provided by Asp253 and His255. 4-CDP-2-C-methyl-D-erythritol 2-phosphate contacts are provided by residues 253–255 (DVH) and 279–280 (HS). His287 is a binding site for a divalent metal cation. Residues 301–303 (DIG), 377–380 (TTNE), Phe384, and Arg387 contribute to the 4-CDP-2-C-methyl-D-erythritol 2-phosphate site.

It in the N-terminal section; belongs to the IspD/TarI cytidylyltransferase family. IspD subfamily. The protein in the C-terminal section; belongs to the IspF family. The cofactor is a divalent metal cation.

The catalysed reaction is 2-C-methyl-D-erythritol 4-phosphate + CTP + H(+) = 4-CDP-2-C-methyl-D-erythritol + diphosphate. It catalyses the reaction 4-CDP-2-C-methyl-D-erythritol 2-phosphate = 2-C-methyl-D-erythritol 2,4-cyclic diphosphate + CMP. It functions in the pathway isoprenoid biosynthesis; isopentenyl diphosphate biosynthesis via DXP pathway; isopentenyl diphosphate from 1-deoxy-D-xylulose 5-phosphate: step 2/6. The protein operates within isoprenoid biosynthesis; isopentenyl diphosphate biosynthesis via DXP pathway; isopentenyl diphosphate from 1-deoxy-D-xylulose 5-phosphate: step 4/6. In terms of biological role, bifunctional enzyme that catalyzes the formation of 4-diphosphocytidyl-2-C-methyl-D-erythritol from CTP and 2-C-methyl-D-erythritol 4-phosphate (MEP) (IspD), and catalyzes the conversion of 4-diphosphocytidyl-2-C-methyl-D-erythritol 2-phosphate (CDP-ME2P) to 2-C-methyl-D-erythritol 2,4-cyclodiphosphate (ME-CPP) with a corresponding release of cytidine 5-monophosphate (CMP) (IspF). This is Bifunctional enzyme IspD/IspF from Rhizobium etli (strain CIAT 652).